The primary structure comprises 449 residues: MANVVENLGKLERRVTISLPKDVVQKEIDARIQKLAKNVRMPGFRPGKVPLKMVAQQYAGQVEAEVLSDKIGQEFFTISRSENLRVAGQPSFAPKQDAAQEGAYAFDATFEVYPEVKIGDLATAEVERSTTTIGDAEIDRTLDILRKQRVHFHARGEGGEHGDGGADTSAQNGDRVTVDFVGKIDGVAFQGGTAEDFVFVLGEGRMLPEFETAALGLKTGEAREFDLKFPDDYHGKDVAGKTAQFTVTMKKVEWPHLPAIDADFAKSLGIEDGDLTKMREEIKENLGREAKRRTQSIVKNQVMDALLKISELDVPKALIEQDQQRLVEMARQDLAQRGVPNAKDAPIPVEMFAEQAERRVKLGLVLAELVKANGLEAKPEQIRAEVDEFAKSYEDPKEVVRWYYSNQQRLAEMEAFVVESNVVDFVLGKAKVTDKEVSFEALASATAQA.

One can recognise a PPIase FKBP-type domain in the interval 173-258 (GDRVTVDFVG…MKKVEWPHLP (86 aa)).

Belongs to the FKBP-type PPIase family. Tig subfamily.

Its subcellular location is the cytoplasm. It catalyses the reaction [protein]-peptidylproline (omega=180) = [protein]-peptidylproline (omega=0). Functionally, involved in protein export. Acts as a chaperone by maintaining the newly synthesized protein in an open conformation. Functions as a peptidyl-prolyl cis-trans isomerase. This is Trigger factor from Burkholderia thailandensis (strain ATCC 700388 / DSM 13276 / CCUG 48851 / CIP 106301 / E264).